Here is a 993-residue protein sequence, read N- to C-terminus: P3N-PIPO polyprotein (993 aa).

The Peptidase S30 domain occupies 154–298 (GVTPYSVQQL…ESTMLSTHHY (145 aa)). Residues His207, Asp216, and Ser249 each act as for P1 proteinase activity in the active site. An Involved in interaction with stylet and aphid transmission motif is present at residues 349–352 (KITC). The Involved in virions binding and aphid transmission motif lies at 607–609 (PTK). One can recognise a Peptidase C6 domain in the interval 633 to 755 (MYIAKSGYCY…DSEMKHYRVG (123 aa)). Residues Cys641 and His714 each act as for helper component proteinase activity in the active site.

This sequence belongs to the potyviridae P3N-PIPO polyprotein family. In terms of assembly, interacts (via PIPO domain) with host PCaP1 protein; this interaction may help to anchor the movement complex to the plasma membrane from which the complex could move to the plasmodesmata. Potyviral RNA is expressed as two polyproteins which undergo post-translational proteolytic processing. Genome polyprotein is processed by NIa-pro, P1 and HC-pro proteinases resulting in the production of at least ten individual proteins. P3N-PIPO is cleaved by P1 and HC-pro proteinases resulting in the production of three individual proteins. The P1 proteinase and the HC-pro cleave only their respective C-termini autocatalytically.

The protein resides in the host cell junction. The protein localises to the host plasmodesma. It carries out the reaction Hydrolyzes a Gly-|-Gly bond at its own C-terminus, commonly in the sequence -Tyr-Xaa-Val-Gly-|-Gly, in the processing of the potyviral polyprotein.. In terms of biological role, required for aphid transmission and also has proteolytic activity. Only cleaves a Gly-Gly dipeptide at its own C-terminus. Interacts with virions and aphid stylets. Acts as a suppressor of RNA-mediated gene silencing, also known as post-transcriptional gene silencing (PTGS), a mechanism of plant viral defense that limits the accumulation of viral RNAs. May have RNA-binding activity. Functionally, allows efficient cell to cell propagation, by bypassing the host cell wall barrier. Transports viral genome to neighboring plant cells directly through plasmosdesmata, without any budding. This Solanum betaceum (Tamarillo) protein is P3N-PIPO polyprotein.